A 78-amino-acid chain; its full sequence is NAD(P)H-quinone oxidoreductase subunit O (78 aa).

Belongs to the complex I NdhO subunit family. In terms of assembly, NDH-1 can be composed of about 15 different subunits; different subcomplexes with different compositions have been identified which probably have different functions.

The protein localises to the cellular thylakoid membrane. The catalysed reaction is a plastoquinone + NADH + (n+1) H(+)(in) = a plastoquinol + NAD(+) + n H(+)(out). The enzyme catalyses a plastoquinone + NADPH + (n+1) H(+)(in) = a plastoquinol + NADP(+) + n H(+)(out). Functionally, NDH-1 shuttles electrons from an unknown electron donor, via FMN and iron-sulfur (Fe-S) centers, to quinones in the respiratory and/or the photosynthetic chain. The immediate electron acceptor for the enzyme in this species is believed to be plastoquinone. Couples the redox reaction to proton translocation, and thus conserves the redox energy in a proton gradient. Cyanobacterial NDH-1 also plays a role in inorganic carbon-concentration. In Prochlorococcus marinus (strain MIT 9301), this protein is NAD(P)H-quinone oxidoreductase subunit O.